The primary structure comprises 183 residues: Large ribosomal subunit protein uL5 (183 aa).

The protein belongs to the universal ribosomal protein uL5 family. In terms of assembly, part of the 50S ribosomal subunit; part of the 5S rRNA/L5/L18/L25 subcomplex. Contacts the 5S rRNA and the P site tRNA. Forms a bridge to the 30S subunit in the 70S ribosome.

In terms of biological role, this is one of the proteins that bind and probably mediate the attachment of the 5S RNA into the large ribosomal subunit, where it forms part of the central protuberance. In the 70S ribosome it contacts protein S13 of the 30S subunit (bridge B1b), connecting the 2 subunits; this bridge is implicated in subunit movement. Contacts the P site tRNA; the 5S rRNA and some of its associated proteins might help stabilize positioning of ribosome-bound tRNAs. The protein is Large ribosomal subunit protein uL5 of Legionella pneumophila (strain Lens).